The primary structure comprises 191 residues: MQTIKCVVVGDGAVGKTCLLISYTTNKFPSEYVPTVFDNYAVTVMIGGEPYTLGLFDTAGQEDYDRLRPLSYPQTDVFLVCFSVVSPSSFENVKEKWVPEITHHCQKTPFLLVGTQIDLRDETSTLEKLAKNKQKPITMEQGEKLAKELKAVKYVECSALTQKGLKNVFDEAILAALEPPEPTKKRKCKFL.

10–17 (GDGAVGKT) lines the GTP pocket. Positions 32-40 (YVPTVFDNY) match the Effector region motif. Residues 57 to 61 (DTAGQ) and 115 to 118 (TQID) each bind GTP. Cys-188 is modified (cysteine methyl ester). Cys-188 carries S-geranylgeranyl cysteine lipidation. The propeptide at 189–191 (KFL) is removed in mature form.

Belongs to the small GTPase superfamily. Rho family. CDC42 subfamily.

Its subcellular location is the cell junction. It is found in the adherens junction. The protein localises to the cell membrane. The enzyme catalyses GTP + H2O = GDP + phosphate + H(+). In terms of biological role, regulates mbt kinase activity and is also required to recruit mbt to adherens junctions. Together with mbt, regulates photoreceptor cell morphogenesis. This chain is Cdc42 homolog, found in Drosophila pseudoobscura pseudoobscura (Fruit fly).